A 401-amino-acid polypeptide reads, in one-letter code: S-adenosylmethionine synthase (401 aa).

Residue histidine 16 participates in ATP binding. Aspartate 18 serves as a coordination point for Mg(2+). Glutamate 44 is a K(+) binding site. The L-methionine site is built by glutamate 57 and glutamine 100. The segment at 100–110 (QSPDIAQGVNE) is flexible loop. Residues 174–176 (DAK), 241–242 (RF), aspartate 250, 256–257 (RK), alanine 273, and lysine 277 contribute to the ATP site. Aspartate 250 lines the L-methionine pocket. L-methionine is bound at residue lysine 281.

Belongs to the AdoMet synthase family. In terms of assembly, homotetramer; dimer of dimers. Mg(2+) serves as cofactor. The cofactor is K(+).

The protein resides in the cytoplasm. The enzyme catalyses L-methionine + ATP + H2O = S-adenosyl-L-methionine + phosphate + diphosphate. It participates in amino-acid biosynthesis; S-adenosyl-L-methionine biosynthesis; S-adenosyl-L-methionine from L-methionine: step 1/1. In terms of biological role, catalyzes the formation of S-adenosylmethionine (AdoMet) from methionine and ATP. The overall synthetic reaction is composed of two sequential steps, AdoMet formation and the subsequent tripolyphosphate hydrolysis which occurs prior to release of AdoMet from the enzyme. In Streptococcus equi subsp. zooepidemicus (strain H70), this protein is S-adenosylmethionine synthase.